We begin with the raw amino-acid sequence, 75 residues long: Small ribosomal subunit protein bS18 (75 aa).

It belongs to the bacterial ribosomal protein bS18 family. In terms of assembly, part of the 30S ribosomal subunit. Forms a tight heterodimer with protein bS6.

Functionally, binds as a heterodimer with protein bS6 to the central domain of the 16S rRNA, where it helps stabilize the platform of the 30S subunit. The sequence is that of Small ribosomal subunit protein bS18 from Sodalis glossinidius (strain morsitans).